The primary structure comprises 358 residues: Uroporphyrinogen decarboxylase (358 aa).

Substrate is bound by residues 29-33, phenylalanine 48, aspartate 79, tyrosine 155, serine 210, and histidine 330; that span reads RQAGR.

Belongs to the uroporphyrinogen decarboxylase family. As to quaternary structure, homodimer.

The protein resides in the cytoplasm. It catalyses the reaction uroporphyrinogen III + 4 H(+) = coproporphyrinogen III + 4 CO2. It participates in porphyrin-containing compound metabolism; protoporphyrin-IX biosynthesis; coproporphyrinogen-III from 5-aminolevulinate: step 4/4. Catalyzes the decarboxylation of four acetate groups of uroporphyrinogen-III to yield coproporphyrinogen-III. The chain is Uroporphyrinogen decarboxylase from Bordetella parapertussis (strain 12822 / ATCC BAA-587 / NCTC 13253).